A 306-amino-acid chain; its full sequence is Homoserine kinase (306 aa).

ATP is bound at residue 84–94; that stretch reads PAGLGLGSSGA.

This sequence belongs to the GHMP kinase family. Homoserine kinase subfamily.

The protein localises to the cytoplasm. It catalyses the reaction L-homoserine + ATP = O-phospho-L-homoserine + ADP + H(+). It participates in amino-acid biosynthesis; L-threonine biosynthesis; L-threonine from L-aspartate: step 4/5. Its function is as follows. Catalyzes the ATP-dependent phosphorylation of L-homoserine to L-homoserine phosphate. This is Homoserine kinase from Sulfurisphaera tokodaii (strain DSM 16993 / JCM 10545 / NBRC 100140 / 7) (Sulfolobus tokodaii).